A 139-amino-acid polypeptide reads, in one-letter code: ATP synthase epsilon chain (139 aa).

It belongs to the ATPase epsilon chain family. As to quaternary structure, F-type ATPases have 2 components, CF(1) - the catalytic core - and CF(0) - the membrane proton channel. CF(1) has five subunits: alpha(3), beta(3), gamma(1), delta(1), epsilon(1). CF(0) has three main subunits: a, b and c.

The protein resides in the cell inner membrane. Produces ATP from ADP in the presence of a proton gradient across the membrane. This Escherichia coli O157:H7 protein is ATP synthase epsilon chain (atpC).